Here is a 466-residue protein sequence, read N- to C-terminus: 3-isopropylmalate dehydratase large subunit (466 aa).

Residues Cys-347, Cys-407, and Cys-410 each contribute to the [4Fe-4S] cluster site.

It belongs to the aconitase/IPM isomerase family. LeuC type 1 subfamily. In terms of assembly, heterodimer of LeuC and LeuD. The cofactor is [4Fe-4S] cluster.

It catalyses the reaction (2R,3S)-3-isopropylmalate = (2S)-2-isopropylmalate. Its pathway is amino-acid biosynthesis; L-leucine biosynthesis; L-leucine from 3-methyl-2-oxobutanoate: step 2/4. In terms of biological role, catalyzes the isomerization between 2-isopropylmalate and 3-isopropylmalate, via the formation of 2-isopropylmaleate. The polypeptide is 3-isopropylmalate dehydratase large subunit (Solibacter usitatus (strain Ellin6076)).